Consider the following 38-residue polypeptide: Large ribosomal subunit protein bL36 (38 aa).

It belongs to the bacterial ribosomal protein bL36 family.

This is Large ribosomal subunit protein bL36 from Hamiltonella defensa subsp. Acyrthosiphon pisum (strain 5AT).